A 577-amino-acid chain; its full sequence is Thrombomodulin (577 aa).

The first 16 residues, 1-16 (MLGIFFLGVLAPASLG), serve as a signal peptide directing secretion. Topologically, residues 17 to 517 (LSALAKLQPT…GPPSARPVHS (501 aa)) are extracellular. The 137-residue stretch at 31–167 (VEHECFALFQ…TETQGFLCEF (137 aa)) folds into the C-type lectin domain. A glycan (N-linked (GlcNAc...) asparagine) is linked at Asn113. A disulfide bridge links Cys135 with Cys156. EGF-like domains are found at residues 240–280 (GAWN…RSCA) and 283–323 (VVQS…HRCE). An N-linked (GlcNAc...) asparagine glycan is attached at Asn243. 18 cysteine pairs are disulfide-bonded: Cys244–Cys255, Cys251–Cys264, Cys266–Cys279, Cys287–Cys295, Cys291–Cys307, Cys309–Cys322, Cys328–Cys339, Cys335–Cys348, Cys350–Cys361, Cys368–Cys377, Cys373–Cys387, Cys389–Cys403, Cys407–Cys416, Cys412–Cys424, Cys426–Cys438, Cys444–Cys454, Cys449–Cys463, and Cys465–Cys479. N-linked (GlcNAc...) asparagine glycosylation occurs at Asn256. The EGF-like 3; calcium-binding domain maps to 324 to 362 (DVDDCKQGPNPCPQLCVNTKGGFECFCYDGYELVDGECV). EGF-like domains are found at residues 364-404 (LLDP…HKCE) and 403-439 (CEMF…SVCT). N-linked (GlcNAc...) asparagine glycosylation occurs at Asn408. In terms of domain architecture, EGF-like 6; calcium-binding spans 440–480 (DIDECSQGECFTSECRNFPGSYECICGPDTALAGQISKDCD). Residues 476 to 513 (SKDCDPIPVREDTKEEEGSGEPPVSPTPGSPTGPPSAR) are disordered. Residues 477–492 (KDCDPIPVREDTKEEE) are compositionally biased toward basic and acidic residues. An O-linked (Xyl...) (chondroitin sulfate) serine glycan is attached at Ser494. Residues 498-512 (PVSPTPGSPTGPPSA) are compositionally biased toward pro residues. A helical transmembrane segment spans residues 518–541 (GVLIGISIASLSLVVALLALLCHL). Topologically, residues 542-577 (RKKQGAARAELEYKCASSAKEVVLQHVRTDRTLQKF) are cytoplasmic.

As to quaternary structure, interacts with ITGAL, ITGAM and ITGB2. Interacts with thrombin/F2; this interaction switches the specificity of thrombin from a procoagulant to an anticoagulant and antifibrinolytic protease. Interacts with ANGP1 and ANGP2; these interactions significantly inhibit the generation of activated PC and TAFIa/CPB2 by the thrombin/thrombomodulin complex. Interacts with PF4; this interaction enhances generation of activated protein C. Interacts with HMGB1; this interaction inhibits HMGB1 inflammatory activity. As to expression, endothelial cells are unique in synthesizing thrombomodulin.

It localises to the membrane. In terms of biological role, endothelial cell receptor that plays a critical role in regulating several physiological processes including hemostasis, coagulation, fibrinolysis, inflammation, and angiogenesis. Acts as a cofactor for thrombin activation of protein C/PROC on the surface of vascular endothelial cells leading to initiation of the activated protein C anticoagulant pathway. Also accelerates the activation of the plasma carboxypeptidase B2/CPB2, which catalyzes removal of C-terminal basic amino acids from its substrates including kinins or anaphylatoxins leading to fibrinolysis inhibition. Plays critical protective roles in changing the cleavage specificity of protease-activated receptor 1/PAR1, inhibiting endothelial cell permeability and inflammation. Suppresses inflammation distinctly from its anticoagulant cofactor activity by sequestering HMGB1 thereby preventing it from engaging cellular receptors such as RAGE and contributing to the inflammatory response. The sequence is that of Thrombomodulin (Thbd) from Mus musculus (Mouse).